The primary structure comprises 420 residues: L-cysteine:1D-myo-inositol 2-amino-2-deoxy-alpha-D-glucopyranoside ligase (420 aa).

Cys-48 lines the Zn(2+) pocket. L-cysteinyl-5'-AMP contacts are provided by residues 48-51, Thr-63, and 86-88; these read CGIT and NIT. Residues 50–60 carry the 'HIGH' region motif; that stretch reads ITPYDSTHLGH. The 'ERGGDP' region signature appears at 192–197; it reads ERGGDP. L-cysteinyl-5'-AMP is bound at residue Trp-232. Cys-236 contributes to the Zn(2+) binding site. 254-256 serves as a coordination point for L-cysteinyl-5'-AMP; sequence GSD. His-261 serves as a coordination point for Zn(2+). Residue Ile-288 participates in L-cysteinyl-5'-AMP binding. The 'KMSKS' region motif lies at 294–298; it reads KMSKS.

It belongs to the class-I aminoacyl-tRNA synthetase family. MshC subfamily. In terms of assembly, monomer. The cofactor is Zn(2+).

It carries out the reaction 1D-myo-inositol 2-amino-2-deoxy-alpha-D-glucopyranoside + L-cysteine + ATP = 1D-myo-inositol 2-(L-cysteinylamino)-2-deoxy-alpha-D-glucopyranoside + AMP + diphosphate + H(+). Functionally, catalyzes the ATP-dependent condensation of GlcN-Ins and L-cysteine to form L-Cys-GlcN-Ins. In Corynebacterium glutamicum (strain R), this protein is L-cysteine:1D-myo-inositol 2-amino-2-deoxy-alpha-D-glucopyranoside ligase.